Here is a 456-residue protein sequence, read N- to C-terminus: tRNA-2-methylthio-N(6)-dimethylallyladenosine synthase (456 aa).

Residues 13 to 129 enclose the MTTase N-terminal domain; the sequence is RYLYVRTFGC…IASLLEEVER (117 aa). [4Fe-4S] cluster-binding residues include C22, C58, C92, C168, C172, and C175. Residues 154-384 enclose the Radical SAM core domain; sequence GTGDVVAQVT…QSIQADITLQ (231 aa). In terms of domain architecture, TRAM spans 387–450; that stretch reads LAETGTVREV…SHSLKGELLS (64 aa).

This sequence belongs to the methylthiotransferase family. MiaB subfamily. As to quaternary structure, monomer. Requires [4Fe-4S] cluster as cofactor.

The protein resides in the cytoplasm. The enzyme catalyses N(6)-dimethylallyladenosine(37) in tRNA + (sulfur carrier)-SH + AH2 + 2 S-adenosyl-L-methionine = 2-methylsulfanyl-N(6)-dimethylallyladenosine(37) in tRNA + (sulfur carrier)-H + 5'-deoxyadenosine + L-methionine + A + S-adenosyl-L-homocysteine + 2 H(+). In terms of biological role, catalyzes the methylthiolation of N6-(dimethylallyl)adenosine (i(6)A), leading to the formation of 2-methylthio-N6-(dimethylallyl)adenosine (ms(2)i(6)A) at position 37 in tRNAs that read codons beginning with uridine. The sequence is that of tRNA-2-methylthio-N(6)-dimethylallyladenosine synthase from Syntrophobacter fumaroxidans (strain DSM 10017 / MPOB).